The following is a 737-amino-acid chain: Aryl hydrocarbon receptor nuclear translocator 2 (737 aa).

A disordered region spans residues 1 to 73; it reads MATPAAVNPS…SRYDDDQIPG (73 aa). A compositionally biased stretch (basic and acidic residues) spans 64–73; sequence SRYDDDQIPG. A bHLH domain is found at 78-131; the sequence is YARENHSEIERRRRNKMTQYITELSDMVPTCSALARKPDKLTILRMAVSHMKSM. PAS domains follow at residues 149-221 and 340-406; these read TEQE…ENSM and SMDM…QVVK. Positions 413–456 constitute a PAC domain; sequence SVMYRFRMKNREWMLIRTSSFTFQNPYSDEIEYIICTNTNVKQL. Disordered stretches follow at residues 525 to 556 and 588 to 721; these read MMVP…FSSS and QVSW…TTNY. 2 stretches are compositionally biased toward polar residues: residues 528 to 543 and 588 to 626; these read PSST…QGSP and QVSW…YQAD. The span at 627–642 shows a compositional bias: low complexity; that stretch reads PSSYSPLSSPATSSPS. Residues 643–656 show a composition bias toward polar residues; it reads GNAYSNLANRNTAF. Residues 659 to 688 are compositionally biased toward low complexity; it reads SGESSQSGGQFQGRPSEVWSQWQSQHHSQQ.

In terms of assembly, efficient DNA binding requires dimerization with another bHLH protein. Heterodimer with the aryl hydrocarbon receptor (AHR), SIM1 or HIF2A/EPAS-1. Isoform 1 and isoform 2 are most highly expressed in the brain, eye and skeletal muscle and to a lower degree in liver, heart, kidney and swim bladder. Isoform 3 is most highly expressed in the eye, forebrain, midbrain, hindbrain, skeletal muscle, gills and brain but is barely detectable in liver, heart, kidney and swim bladder. Before the pharyngula period isoform 3 is expressed throughout the entire embryo and during this period extensively in the brain and eye.

Its subcellular location is the nucleus. Transcription factor that plays a role in the development of the hypothalamo-pituitary axis. Specifically recognizes the xenobiotic response element (XRE). Isoform 1 acts as a transcriptional activator. Isoform 3 acts as a transcriptional repressor. The chain is Aryl hydrocarbon receptor nuclear translocator 2 from Danio rerio (Zebrafish).